The chain runs to 185 residues: Ribosome-recycling factor (185 aa).

Belongs to the RRF family.

Its subcellular location is the cytoplasm. Functionally, responsible for the release of ribosomes from messenger RNA at the termination of protein biosynthesis. May increase the efficiency of translation by recycling ribosomes from one round of translation to another. The chain is Ribosome-recycling factor from Desulforapulum autotrophicum (strain ATCC 43914 / DSM 3382 / VKM B-1955 / HRM2) (Desulfobacterium autotrophicum).